The following is a 154-amino-acid chain: 6,7-dimethyl-8-ribityllumazine synthase (154 aa).

5-amino-6-(D-ribitylamino)uracil is bound by residues Phe-22, 56–58 (AFE), and 80–82 (AVI). Position 85–86 (85–86 (ST)) interacts with (2S)-2-hydroxy-3-oxobutyl phosphate. His-88 acts as the Proton donor in catalysis. Residue Phe-113 coordinates 5-amino-6-(D-ribitylamino)uracil. Arg-127 serves as a coordination point for (2S)-2-hydroxy-3-oxobutyl phosphate.

It belongs to the DMRL synthase family.

It catalyses the reaction (2S)-2-hydroxy-3-oxobutyl phosphate + 5-amino-6-(D-ribitylamino)uracil = 6,7-dimethyl-8-(1-D-ribityl)lumazine + phosphate + 2 H2O + H(+). It participates in cofactor biosynthesis; riboflavin biosynthesis; riboflavin from 2-hydroxy-3-oxobutyl phosphate and 5-amino-6-(D-ribitylamino)uracil: step 1/2. Functionally, catalyzes the formation of 6,7-dimethyl-8-ribityllumazine by condensation of 5-amino-6-(D-ribitylamino)uracil with 3,4-dihydroxy-2-butanone 4-phosphate. This is the penultimate step in the biosynthesis of riboflavin. The sequence is that of 6,7-dimethyl-8-ribityllumazine synthase from Clostridium beijerinckii (strain ATCC 51743 / NCIMB 8052) (Clostridium acetobutylicum).